Here is a 94-residue protein sequence, read N- to C-terminus: Surfactant-associated protein 3 (94 aa).

As to expression, found in lung alveolar cells type I and II, as well as alveolar macrophages (at protein level). Detected also in testis and kidney. Expressed by different tissues of the ocular system like cornea, conjuctiva, lacrimal gland, eyelid and efferent tear ducts (at protein level). From these tissues is secreted into the tear film (at protein level).

Its subcellular location is the cytoplasm. It localises to the secreted. Its function is as follows. Putative surfactant protein. May be involved in wound healing and in the reduction of the surface tension at the ocular surface. The polypeptide is Surfactant-associated protein 3 (SFTA3) (Homo sapiens (Human)).